The following is a 25-amino-acid chain: Tubulin alpha chain (25 aa).

GTP is bound at residue Gln11.

The protein belongs to the tubulin family. In terms of assembly, dimer of alpha and beta chains. A typical microtubule is a hollow water-filled tube with an outer diameter of 25 nm and an inner diameter of 15 nM. Alpha-beta heterodimers associate head-to-tail to form protofilaments running lengthwise along the microtubule wall with the beta-tubulin subunit facing the microtubule plus end conferring a structural polarity. Microtubules usually have 13 protofilaments but different protofilament numbers can be found in some organisms and specialized cells. Mg(2+) serves as cofactor.

The protein resides in the cytoplasm. It localises to the cytoskeleton. It catalyses the reaction GTP + H2O = GDP + phosphate + H(+). Functionally, tubulin is the major constituent of microtubules, a cylinder consisting of laterally associated linear protofilaments composed of alpha- and beta-tubulin heterodimers. Microtubules grow by the addition of GTP-tubulin dimers to the microtubule end, where a stabilizing cap forms. Below the cap, tubulin dimers are in GDP-bound state, owing to GTPase activity of alpha-tubulin. This is Tubulin alpha chain from Leptomonas seymouri.